Consider the following 360-residue polypeptide: Photosystem II protein D1 (360 aa).

Transmembrane regions (helical) follow at residues 29–46, 118–133, and 142–156; these read YIGW…TATS, HFLL…EWEL, and WIFV…AASA. His118 is a chlorophyll a binding site. Tyr126 lines the pheophytin a pocket. Residues Asp170 and Glu189 each coordinate [CaMn4O5] cluster. The chain crosses the membrane as a helical span at residues 197–218; the sequence is FHMAGVAGVFGGSLFSAMHGSL. Position 198 (His198) interacts with chlorophyll a. A quinone-binding positions include His215 and 264–265; that span reads SF. His215 serves as a coordination point for Fe cation. A Fe cation-binding site is contributed by His272. A helical membrane pass occupies residues 274–288; it reads FLALWPVVGIWLTAM. [CaMn4O5] cluster is bound by residues His332, Glu333, Asp342, and Ala344. A propeptide spanning residues 345 to 360 is cleaved from the precursor; sequence SGEVLPVALTAPAVNG.

Belongs to the reaction center PufL/M/PsbA/D family. PSII is composed of 1 copy each of membrane proteins PsbA, PsbB, PsbC, PsbD, PsbE, PsbF, PsbH, PsbI, PsbJ, PsbK, PsbL, PsbM, PsbT, PsbX, PsbY, PsbZ, Psb30/Ycf12, at least 3 peripheral proteins of the oxygen-evolving complex and a large number of cofactors. It forms dimeric complexes. The D1/D2 heterodimer binds P680, chlorophylls that are the primary electron donor of PSII, and subsequent electron acceptors. It shares a non-heme iron and each subunit binds pheophytin, quinone, additional chlorophylls, carotenoids and lipids. D1 provides most of the ligands for the Mn4-Ca-O5 cluster of the oxygen-evolving complex (OEC). There is also a Cl(-1) ion associated with D1 and D2, which is required for oxygen evolution. The PSII complex binds additional chlorophylls, carotenoids and specific lipids. serves as cofactor. Post-translationally, tyr-161 forms a radical intermediate that is referred to as redox-active TyrZ, YZ or Y-Z. In terms of processing, C-terminally processed by CTPA; processing is essential to allow assembly of the oxygen-evolving complex and thus photosynthetic growth.

It is found in the plastid. The protein resides in the chloroplast thylakoid membrane. It carries out the reaction 2 a plastoquinone + 4 hnu + 2 H2O = 2 a plastoquinol + O2. In terms of biological role, photosystem II (PSII) is a light-driven water:plastoquinone oxidoreductase that uses light energy to abstract electrons from H(2)O, generating O(2) and a proton gradient subsequently used for ATP formation. It consists of a core antenna complex that captures photons, and an electron transfer chain that converts photonic excitation into a charge separation. The D1/D2 (PsbA/PsbD) reaction center heterodimer binds P680, the primary electron donor of PSII as well as several subsequent electron acceptors. The polypeptide is Photosystem II protein D1 (Phaeodactylum tricornutum (strain CCAP 1055/1)).